The sequence spans 216 residues: Probable glutamine ABC transporter permease protein GlnM (216 aa).

An ABC transmembrane type-1 domain is found at 17 to 205 (FYHTLLASVI…VLTIPLSIGV (189 aa)). Helical transmembrane passes span 21 to 41 (LLAS…VAVM), 63 to 83 (IPLL…GLRL), 85 to 105 (GFQA…AEAI), 132 to 152 (LHII…NQFL), and 181 to 201 (LVVF…TIPL).

It belongs to the binding-protein-dependent transport system permease family. As to quaternary structure, the complex is composed of two ATP-binding proteins (GlnQ), two transmembrane proteins (GlnM and GlnP) and a solute-binding protein (GlnH).

Its subcellular location is the cell membrane. Its function is as follows. Part of the ABC transporter complex GlnHMPQ involved in glutamine transport. Probably responsible for the translocation of the substrate across the membrane. This is Probable glutamine ABC transporter permease protein GlnM (glnM) from Bacillus subtilis (strain 168).